Reading from the N-terminus, the 551-residue chain is MAKAFVFSLCLLLVFNGCLAARQSQLSPQNQCQLNQLQAREPDNRIQAEAGQIETWNFNQGDFQCAGVAASRITIQRNGLHLPSYSNAPQLIYIVQGRGVLGAVFSGCPETFEESQQSSQQGRQQEQEQERQQQQQGEQGRQQGQQEQQQERQGRQQGRQQQEEGRQQEQQQGQQGRPQQQQQFRQLDRHQKTRRIREGDVVAIPAGVAYWSYNDGDQELVAVNLFHVSSDHNQLDQNPRKFYLAGNPENEFNQQGQSQPRQQGEQGRPGQHQQPFGRPRQQEQQGNGNNVFSGFNTQLLAQALNVNEETARNLQGQNDNRNQIIQVRGNLDFVQPPRGRQEREHEERQQEQLQQERQQQGEQLMANGLEETFCSLRLKENIGNPERADIFSPRAGRISTLNSHNLPILRFLRLSAERGFFYRNGIYSPHWNVNAHSVVYVIRGNARVQVVNENGDAILDQEVQQGQLFIVPQNHGVIQQAGNQGFEYFAFKTEENAFINTLAGRTSFLRALPDEVLANAYQISREQARQLKYNRQETIALSSSQQRRAVV.

The N-terminal stretch at 1–20 (MAKAFVFSLCLLLVFNGCLA) is a signal peptide. Cystine bridges form between Cys-32–Cys-65 and Cys-108–Cys-374. In terms of domain architecture, Cupin type-1 1 spans 37 to 312 (LQAREPDNRI…ALNVNEETAR (276 aa)). 3 disordered regions span residues 111 to 194 (TFEE…QKTR), 238 to 293 (NPRK…NVFS), and 329 to 360 (GNLD…RQQQ). 3 stretches are compositionally biased toward low complexity: residues 114–124 (ESQQSSQQGRQ), 132–148 (QQQQ…QQEQ), and 168–185 (QEQQ…QQFR). Arg-194 provides a ligand contact to Ca(2+). The span at 254–275 (QQGQSQPRQQGEQGRPGQHQQP) shows a compositional bias: low complexity. Residues 282–293 (QEQQGNGNNVFS) show a composition bias toward polar residues. A compositionally biased stretch (basic and acidic residues) spans 339–350 (GRQEREHEERQQ). Low complexity predominate over residues 351–360 (EQLQQERQQQ). The NGXEET; peptidase recognition motif signature appears at 367–372 (NGLEET). The Cupin type-1 2 domain occupies 380–529 (ENIGNPERAD…AYQISREQAR (150 aa)).

This sequence belongs to the 11S seed storage protein (globulins) family. Hexamer of two trimers; each subunit is composed of an acidic and a basic chain derived from a single precursor and linked by a disulfide bond. Post-translationally, proteolytically processed from a single precursor to produce an acidic and a basic chain that are linked by a disulfide bond. Expressed in seed (at protein level). Expressed in seed.

Functionally, seed storage protein. The chain is Prunin 1 Pru du 6 from Prunus dulcis (Almond).